The sequence spans 285 residues: Troponin T, cardiac muscle (285 aa).

Residues 1–58 (MSDVEEAVEEYEEQEEAAEEEHEEAVEEEAGGEAEAGEPCTAEDGEEEEGREAEDGPV) show a composition bias toward acidic residues. Disordered regions lie at residues 1–83 (MSDV…GERV) and 111–206 (RKKE…EKKK). An N-acetylserine modification is found at serine 2. Serine 2 carries the phosphoserine; by CK2 modification. The segment covering 66–77 (RPFMPNLVPPKI) has biased composition (pro residues). Basic and acidic residues-rich tracts occupy residues 111–171 (RKKE…DEAR) and 190–206 (QTER…EKKK). Phosphothreonine; by PKC/PRKCA is present on threonine 191. Position 195 is a phosphoserine; by PKC/PRKCA (serine 195). At threonine 200 the chain carries Phosphothreonine; by PKC/PRKCA and RAF1. Residue threonine 281 is modified to Phosphothreonine; by PKC/PRKCA.

It belongs to the troponin T family. Post-translationally, the N-terminus is blocked. In terms of processing, phosphorylation at Thr-200 by PRKCA induces significant reduction in myofilament calcium sensitivity and actomyosin ATPase activity.

In terms of biological role, troponin T is the tropomyosin-binding subunit of troponin, the thin filament regulatory complex which confers calcium-sensitivity to striated muscle actomyosin ATPase activity. The sequence is that of Troponin T, cardiac muscle (TNNT2) from Bos taurus (Bovine).